A 338-amino-acid chain; its full sequence is MGLEQFKKYPLTFGPTPITSMKRLSKTLGGKVEIFAKREDCNSGLAFGGNKIRKLEYLIPEAIDGGYDTLVSIGGIQSNQTRQVAAVAAHLGLDCVLIQEDWVDYKDTMYDRVGNIELSRIVNADVRLDSSKFDIGIRPSFKNALEELTKKGKKPFPIPAGCSEHPYGGLGFVGCVEEIYEQEKQLGFKFDKIVVCTVTGSSFAGIIVGMALTGRQKDVIGIDASATPEKTKAQVLRIAQNTAKLIGLEKELTESDVNIDTRFAHPAYGIPNEGTIEAIKLCGATEGVLTDPVYEGKSMQGLIHLVRNNEIAEGSKVLYIHLGGAPALSAYSAYFKNT.

K51 is subject to N6-(pyridoxal phosphate)lysine. Catalysis depends on S78, which acts as the Nucleophile.

It belongs to the ACC deaminase/D-cysteine desulfhydrase family. Requires pyridoxal 5'-phosphate as cofactor.

It carries out the reaction 1-aminocyclopropane-1-carboxylate + H2O = 2-oxobutanoate + NH4(+). Its function is as follows. Catalyzes a cyclopropane ring-opening reaction, the irreversible conversion of 1-aminocyclopropane-1-carboxylate (ACC) to ammonia and alpha-ketobutyrate. In Schizosaccharomyces pombe (strain 972 / ATCC 24843) (Fission yeast), this protein is Probable 1-aminocyclopropane-1-carboxylate deaminase.